A 94-amino-acid polypeptide reads, in one-letter code: Pyrimidine/purine nucleoside phosphorylase (94 aa).

The protein belongs to the nucleoside phosphorylase PpnP family.

The catalysed reaction is a purine D-ribonucleoside + phosphate = a purine nucleobase + alpha-D-ribose 1-phosphate. The enzyme catalyses adenosine + phosphate = alpha-D-ribose 1-phosphate + adenine. It catalyses the reaction cytidine + phosphate = cytosine + alpha-D-ribose 1-phosphate. It carries out the reaction guanosine + phosphate = alpha-D-ribose 1-phosphate + guanine. The catalysed reaction is inosine + phosphate = alpha-D-ribose 1-phosphate + hypoxanthine. The enzyme catalyses thymidine + phosphate = 2-deoxy-alpha-D-ribose 1-phosphate + thymine. It catalyses the reaction uridine + phosphate = alpha-D-ribose 1-phosphate + uracil. It carries out the reaction xanthosine + phosphate = alpha-D-ribose 1-phosphate + xanthine. Its function is as follows. Catalyzes the phosphorolysis of diverse nucleosides, yielding D-ribose 1-phosphate and the respective free bases. Can use uridine, adenosine, guanosine, cytidine, thymidine, inosine and xanthosine as substrates. Also catalyzes the reverse reactions. The protein is Pyrimidine/purine nucleoside phosphorylase of Escherichia fergusonii (strain ATCC 35469 / DSM 13698 / CCUG 18766 / IAM 14443 / JCM 21226 / LMG 7866 / NBRC 102419 / NCTC 12128 / CDC 0568-73).